The following is a 461-amino-acid chain: GTPase Der (461 aa).

EngA-type G domains follow at residues 9 to 171 and 200 to 371; these read KTIA…DLNQ and IQVG…ECFS. GTP-binding positions include 15-22, 62-66, 123-126, 206-213, 253-257, and 317-320; these read GQPNVGKS, DTGGM, NKID, GRVNVGKS, DTAGI, and NKWD. Positions 372–456 constitute a KH-like domain; the sequence is KRIPTSLLNS…PLILNAKDKK (85 aa).

The protein belongs to the TRAFAC class TrmE-Era-EngA-EngB-Septin-like GTPase superfamily. EngA (Der) GTPase family. As to quaternary structure, associates with the 50S ribosomal subunit.

GTPase that plays an essential role in the late steps of ribosome biogenesis. This Helicobacter pylori (strain Shi470) protein is GTPase Der.